The sequence spans 370 residues: Peptide chain release factor 2 (370 aa).

Gln-249 carries the N5-methylglutamine modification.

This sequence belongs to the prokaryotic/mitochondrial release factor family. Methylated by PrmC. Methylation increases the termination efficiency of RF2.

The protein resides in the cytoplasm. Functionally, peptide chain release factor 2 directs the termination of translation in response to the peptide chain termination codons UGA and UAA. This chain is Peptide chain release factor 2, found in Kosmotoga olearia (strain ATCC BAA-1733 / DSM 21960 / TBF 19.5.1).